The following is a 603-amino-acid chain: NADH-ubiquinone oxidoreductase chain 5 (603 aa).

The next 16 helical transmembrane spans lie at 4 to 24 (YTTM…ATLI), 36 to 56 (VKMT…MFMC), 87 to 107 (MMFI…SLWY), 114 to 134 (INQF…LVTA), 137 to 157 (LFQL…LIGW), 171 to 191 (AILY…WFLL), 200 to 220 (QMIL…LLAA), 241 to 261 (TPVS…FLLI), 272 to 292 (LIQT…AICA), 301 to 320 (IVAF…IGIN), 325 to 347 (AFLH…GSII), 366 to 386 (LPLT…MPFL), 407 to 429 (WALS…MILL), 457 to 477 (LTIG…PTSP), 482 to 502 (IPLY…LTAF), and 583 to 603 (MIKL…LLIM).

This sequence belongs to the complex I subunit 5 family. As to quaternary structure, core subunit of respiratory chain NADH dehydrogenase (Complex I) which is composed of 45 different subunits.

It localises to the mitochondrion inner membrane. It catalyses the reaction a ubiquinone + NADH + 5 H(+)(in) = a ubiquinol + NAD(+) + 4 H(+)(out). In terms of biological role, core subunit of the mitochondrial membrane respiratory chain NADH dehydrogenase (Complex I) which catalyzes electron transfer from NADH through the respiratory chain, using ubiquinone as an electron acceptor. Essential for the catalytic activity and assembly of complex I. This chain is NADH-ubiquinone oxidoreductase chain 5 (MT-ND5), found in Hylobates lar (Lar gibbon).